The primary structure comprises 510 residues: Bifunctional purine biosynthesis protein PurH (510 aa).

Positions 1 to 145 (MTKRALLSVS…KNFAAVLPIV (145 aa)) constitute an MGS-like domain.

Belongs to the PurH family.

It catalyses the reaction (6R)-10-formyltetrahydrofolate + 5-amino-1-(5-phospho-beta-D-ribosyl)imidazole-4-carboxamide = 5-formamido-1-(5-phospho-D-ribosyl)imidazole-4-carboxamide + (6S)-5,6,7,8-tetrahydrofolate. The catalysed reaction is IMP + H2O = 5-formamido-1-(5-phospho-D-ribosyl)imidazole-4-carboxamide. It functions in the pathway purine metabolism; IMP biosynthesis via de novo pathway; 5-formamido-1-(5-phospho-D-ribosyl)imidazole-4-carboxamide from 5-amino-1-(5-phospho-D-ribosyl)imidazole-4-carboxamide (10-formyl THF route): step 1/1. Its pathway is purine metabolism; IMP biosynthesis via de novo pathway; IMP from 5-formamido-1-(5-phospho-D-ribosyl)imidazole-4-carboxamide: step 1/1. This is Bifunctional purine biosynthesis protein PurH from Lactiplantibacillus plantarum (strain ATCC BAA-793 / NCIMB 8826 / WCFS1) (Lactobacillus plantarum).